The sequence spans 1503 residues: Chromosome partition protein MukB (1503 aa).

The segment covering 1–19 has biased composition (polar residues); the sequence is MMNTNELFDQTAVNSSQDK. The tract at residues 1-21 is disordered; sequence MMNTNELFDQTAVNSSQDKPL. Position 65-72 (65-72) interacts with ATP; sequence GGNGAGKS. 5 coiled-coil regions span residues 370 to 495, 536 to 616, 662 to 697, 865 to 1173, and 1238 to 1293; these read MNAL…QRLS, DQKM…HRQQ, MQEM…SQAD, EMLM…SAEE, and DAIE…LQNI. The flexible hinge stretch occupies residues 696 to 813; it reads ADGAEDIRLN…EVPLFGRAAR (118 aa).

This sequence belongs to the SMC family. MukB subfamily. Homodimerization via its hinge domain. Binds to DNA via its C-terminal region. Interacts, and probably forms a ternary complex, with MukE and MukF via its C-terminal region. The complex formation is stimulated by calcium or magnesium. Interacts with tubulin-related protein FtsZ.

The protein resides in the cytoplasm. It is found in the nucleoid. Functionally, plays a central role in chromosome condensation, segregation and cell cycle progression. Functions as a homodimer, which is essential for chromosome partition. Involved in negative DNA supercoiling in vivo, and by this means organize and compact chromosomes. May achieve or facilitate chromosome segregation by condensation DNA from both sides of a centrally located replisome during cell division. The sequence is that of Chromosome partition protein MukB from Haemophilus ducreyi (strain 35000HP / ATCC 700724).